Consider the following 889-residue polypeptide: Rho GTPase-activating protein 27 (889 aa).

The region spanning 6 to 69 (VGDVYVLVEH…PAQYVRELPA (64 aa)) is the SH3 domain. The tract at residues 104-132 (AGPDGAPEESGGRASSLCGPAQRGAATQR) is disordered. Phosphoserine occurs at positions 156, 216, and 249. WW domains are found at residues 246–280 (PLPS…SPFE) and 299–333 (VSLE…DEAE). Residues 329-341 (EDEAENEPEEELE) are compositionally biased toward acidic residues. Residues 329–397 (EDEAENEPEE…SPLTTPPGWS (69 aa)) form a disordered region. Serine 347 carries the post-translational modification Phosphoserine. Over residues 383–395 (EPGPTSPLTTPPG) the composition is skewed to low complexity. In terms of domain architecture, WW 3 spans 411–444 (HFTQEQWVRLEDPHGKPYFYNPEDSSVRWELPQV). The disordered stretch occupies residues 447 to 474 (PAPRSIHKSSQDGDTPAQASPPEEKVPA). Residue serine 456 is modified to Phosphoserine. Threonine 461 is subject to Phosphothreonine. Residue serine 466 is modified to Phosphoserine. A PH domain is found at 496–612 (TLDKAGVLHR…WHKAIAQGIQ (117 aa)). The segment at 617–655 (ELPPEESESSRVDFGSSERLGSWQEKEEDARPNAAAPAL) is disordered. A Rho-GAP domain is found at 697 to 886 (CALAALCERE…LILQQCADIF (190 aa)).

Interacts with SH3KBP1/CIN85. In terms of tissue distribution, expressed in germinal center B-cell, spleen, chronic lymphocytic leukemia, pancreatic cancer and lung cancer.

Its subcellular location is the cytoplasm. The protein localises to the membrane. Functionally, rho GTPase-activating protein which may be involved in clathrin-mediated endocytosis. GTPase activators for the Rho-type GTPases act by converting them to an inactive GDP-bound state. Has activity toward CDC42 and RAC1. The protein is Rho GTPase-activating protein 27 of Homo sapiens (Human).